The sequence spans 525 residues: Ribosomal protein S6 kinase beta-1 (525 aa).

Positions 28–32 (FDIDL) match the TOS motif motif. Positions 28 to 54 (FDIDLDQPEDAGSEDELEEGGQLNESM) are disordered. Over residues 30–46 (IDLDQPEDAGSEDELEE) the composition is skewed to acidic residues. One can recognise a Protein kinase domain in the interval 91-352 (FELLRVLGKG…AGEVQAHPFF (262 aa)). Residues 97-105 (LGKGGYGKV) and Lys123 contribute to the ATP site. Asp218 functions as the Proton acceptor in the catalytic mechanism. A Phosphothreonine; by PDPK1 modification is found at Thr252. Residues 353 to 423 (RHINWEELLA…VAPSVLESVK (71 aa)) enclose the AGC-kinase C-terminal domain. The disordered stretch occupies residues 380–399 (SQFDSKFTRQTPVDSPDDST). The segment covering 381–399 (QFDSKFTRQTPVDSPDDST) has biased composition (polar residues). Ser394 is modified (phosphoserine). The residue at position 412 (Thr412) is a Phosphothreonine; by MTOR, NEK6 and NEK7. The autoinhibitory domain stretch occupies residues 424 to 525 (EKFSFEPKIR…KRPEHLRMNL (102 aa)). Ser434 and Ser441 each carry phosphoserine. At Thr444 the chain carries Phosphothreonine. A phosphoserine mark is found at Ser447 and Ser452. The tract at residues 486 to 509 (VTTSGEASAPLPIRQPNSGPYKKQ) is disordered. An N6-acetyllysine modification is found at Lys516.

Belongs to the protein kinase superfamily. AGC Ser/Thr protein kinase family. S6 kinase subfamily. Interacts with PPP1R9A/neurabin-1. Interacts with RPTOR. Interacts with IRS1. Interacts with EIF3B and EIF3C. Interacts with POLDIP3. Interacts with TRAF4. Interacts (via N-terminus) with IER5. Post-translationally, dephosphorylation by PPP1CC at Thr-412 in mitochondrion. Phosphorylation at Thr-412 is regulated by mTORC1. The phosphorylation at this site is maintained by an agonist-dependent autophosphorylation mechanism. Activated by phosphorylation at Thr-252 by PDPK1. Brain.

Its subcellular location is the cytoplasm. The protein resides in the synapse. It localises to the synaptosome. It is found in the mitochondrion outer membrane. The protein localises to the mitochondrion. It carries out the reaction L-seryl-[protein] + ATP = O-phospho-L-seryl-[protein] + ADP + H(+). The catalysed reaction is L-threonyl-[protein] + ATP = O-phospho-L-threonyl-[protein] + ADP + H(+). Its activity is regulated as follows. Activation requires multiple phosphorylation events on serine/threonine residues. Activation appears to be first mediated by phosphorylation of multiple sites in the autoinhibitory domain, which facilitates phosphorylation at Thr-412, disrupting the autoinhibitory mechanism and allowing phosphorylation of Thr-252 by PDPK1. The active conformation of the kinase is believed to be stabilized by a mechanism involving three conserved phosphorylation sites located in the kinase domain activation loop (Thr-252) and in the AGC-kinase C-terminal domain (Ser-394 in the middle of the tail/linker region and Thr-412 within a hydrophobic motif at its end). Activated by mTORC1; isoform Alpha I and isoform Alpha II are sensitive to rapamycin, which inhibits activating phosphorylation at Thr-412. Activated by PDPK1. Functionally, serine/threonine-protein kinase that acts downstream of mTOR signaling in response to growth factors and nutrients to promote cell proliferation, cell growth and cell cycle progression. Regulates protein synthesis through phosphorylation of EIF4B, RPS6 and EEF2K, and contributes to cell survival by repressing the pro-apoptotic function of BAD. Under conditions of nutrient depletion, the inactive form associates with the EIF3 translation initiation complex. Upon mitogenic stimulation, phosphorylation by the mechanistic target of rapamycin complex 1 (mTORC1) leads to dissociation from the EIF3 complex and activation. The active form then phosphorylates and activates several substrates in the pre-initiation complex, including the EIF2B complex and the cap-binding complex component EIF4B. Also controls translation initiation by phosphorylating a negative regulator of EIF4A, PDCD4, targeting it for ubiquitination and subsequent proteolysis. Promotes initiation of the pioneer round of protein synthesis by phosphorylating POLDIP3/SKAR. In response to IGF1, activates translation elongation by phosphorylating EEF2 kinase (EEF2K), which leads to its inhibition and thus activation of EEF2. Also plays a role in feedback regulation of mTORC2 by mTORC1 by phosphorylating MAPKAP1/SIN1, MTOR and RICTOR, resulting in the inhibition of mTORC2 and AKT1 signaling. Also involved in feedback regulation of mTORC1 and mTORC2 by phosphorylating DEPTOR. Mediates cell survival by phosphorylating the pro-apoptotic protein BAD and suppressing its pro-apoptotic function. Phosphorylates mitochondrial URI1 leading to dissociation of a URI1-PPP1CC complex. The free mitochondrial PPP1CC can then dephosphorylate RPS6KB1 at Thr-412, which is proposed to be a negative feedback mechanism for the RPS6KB1 anti-apoptotic function. Mediates TNF-alpha-induced insulin resistance by phosphorylating IRS1 at multiple serine residues, resulting in accelerated degradation of IRS1. In cells lacking functional TSC1-2 complex, constitutively phosphorylates and inhibits GSK3B. May be involved in cytoskeletal rearrangement through binding to neurabin. Phosphorylates and activates the pyrimidine biosynthesis enzyme CAD, downstream of MTOR. Following activation by mTORC1, phosphorylates EPRS and thereby plays a key role in fatty acid uptake by adipocytes and also most probably in interferon-gamma-induced translation inhibition. This chain is Ribosomal protein S6 kinase beta-1 (Rps6kb1), found in Rattus norvegicus (Rat).